Reading from the N-terminus, the 146-residue chain is Hemoglobin subunit beta-1 (146 aa).

Ser-1 is subject to N-acetylserine. The region spanning 2–146 (FLSAEEKGLV…VASALAHRYH (145 aa)) is the Globin domain. Lys-17 is modified (N6-succinyllysine). Residues Ser-44 and Ser-50 each carry the phosphoserine modification. Lys-59 carries the N6-succinyllysine modification. Heme b is bound by residues His-63 and His-92. Arg-104 carries the post-translational modification Asymmetric dimethylarginine.

This sequence belongs to the globin family. As to quaternary structure, heterotetramer of two alpha chains and two beta chains. In terms of tissue distribution, red blood cells.

Involved in oxygen transport from the lung to the various peripheral tissues. This chain is Hemoglobin subunit beta-1 (HBB1), found in Panthera leo (Lion).